The following is a 140-amino-acid chain: MAIERTFSILKPDATARNLTGAINAVIEEAGLRIVAQRRIRMSEAQAKTFYEVHAERPFYGELVSFMTSGPVVVQVLEGENAVAKYREVMGATNPAQAAEGTIRKKFALSVGENSVHGSDSAENAKVEIAQFFDEKDIVG.

Lys-11, Phe-59, Arg-87, Thr-93, Arg-104, and Asn-114 together coordinate ATP. The active-site Pros-phosphohistidine intermediate is His-117.

It belongs to the NDK family. As to quaternary structure, homotetramer. Requires Mg(2+) as cofactor.

It localises to the cytoplasm. It carries out the reaction a 2'-deoxyribonucleoside 5'-diphosphate + ATP = a 2'-deoxyribonucleoside 5'-triphosphate + ADP. It catalyses the reaction a ribonucleoside 5'-diphosphate + ATP = a ribonucleoside 5'-triphosphate + ADP. Major role in the synthesis of nucleoside triphosphates other than ATP. The ATP gamma phosphate is transferred to the NDP beta phosphate via a ping-pong mechanism, using a phosphorylated active-site intermediate. This chain is Nucleoside diphosphate kinase, found in Methylobacterium nodulans (strain LMG 21967 / CNCM I-2342 / ORS 2060).